The primary structure comprises 763 residues: ATP-dependent RNA helicase glh-1 (763 aa).

The tract at residues M1–G30 is disordered. Over residues F18–G30 the composition is skewed to gly residues. 7 repeat units span residues F24–G33, F34–G43, F44–G53, F54–G63, F64–G73, F74–G83, and F84–P93. Residues F24–P93 form a 7 X 10 AA tandem repeats, Gly-rich region. 2 consecutive CCHC-type zinc fingers follow at residues N158–E175 and R183–E200. The disordered stretch occupies residues H193–D230. The segment covering T194–R208 has biased composition (basic and acidic residues). Positions T209–D230 are enriched in gly residues. CCHC-type zinc fingers lie at residues M242 to E259 and R262 to N279. Positions K341–Q369 match the Q motif motif. One can recognise a Helicase ATP-binding domain in the interval L372–M556. A385–T392 is a binding site for ATP. The Phosphodegron signature appears at I423–T427. The DEAD box signature appears at D499–D502. In terms of domain architecture, Helicase C-terminal spans D592–A739.

The protein belongs to the DEAD box helicase family. DDX4/VASA subfamily. Interacts with csn-5; this may prevent glh-1 degradation induced by kgb-1. Interacts with zyx-1. Interacts (via the N-terminal region containing the four CCHC zinc fingers) with pan-1. Interacts with kgb-1; this may promote glh-1 degradation by the proteasome. Post-translationally, phosphorylated by kgb-1 (in vitro); this may be responsible for its degradation by the proteasome.

The protein resides in the cytoplasm. It is found in the cytoplasmic granule. It localises to the perinuclear region. The enzyme catalyses ATP + H2O = ADP + phosphate + H(+). Probable ATP-binding RNA helicase. May act redundantly with the P-granule component glh-4 to regulate the formation of the granular structure of P-granules in embryos. Plays a role in positively regulating the localization of pgl-1 to P-granules. May play a role in transgenerational epigenetic inheritance. May protect somatic cells from excessive apoptosis during normal development. This chain is ATP-dependent RNA helicase glh-1, found in Caenorhabditis elegans.